The following is a 649-amino-acid chain: DNA mismatch repair protein MutL (649 aa).

Residues 339 to 414 (KKKTKDESVQ…VREEESWQST (76 aa)) are disordered. Residues 342 to 360 (TKDESVQEQFHFEHTKPKE) are compositionally biased toward basic and acidic residues. The span at 388–402 (PQLWQQPKQEWQPPQ) shows a compositional bias: low complexity.

It belongs to the DNA mismatch repair MutL/HexB family.

Its function is as follows. This protein is involved in the repair of mismatches in DNA. It is required for dam-dependent methyl-directed DNA mismatch repair. May act as a 'molecular matchmaker', a protein that promotes the formation of a stable complex between two or more DNA-binding proteins in an ATP-dependent manner without itself being part of a final effector complex. The chain is DNA mismatch repair protein MutL from Bacillus cytotoxicus (strain DSM 22905 / CIP 110041 / 391-98 / NVH 391-98).